The sequence spans 285 residues: 4-hydroxybenzoate octaprenyltransferase (285 aa).

7 consecutive transmembrane segments (helical) span residues 33–53, 93–113, 134–154, 166–186, 209–229, 233–253, and 265–285; these read FLAA…LGVV, LILF…MNTL, ITYL…PMAY, WLLF…YAMV, LMIG…GIQL, SLYN…QWLI, and FLNN…SVLI.

It belongs to the UbiA prenyltransferase family. The cofactor is Mg(2+).

It localises to the cell inner membrane. It catalyses the reaction all-trans-octaprenyl diphosphate + 4-hydroxybenzoate = 4-hydroxy-3-(all-trans-octaprenyl)benzoate + diphosphate. It functions in the pathway cofactor biosynthesis; ubiquinone biosynthesis. Catalyzes the prenylation of para-hydroxybenzoate (PHB) with an all-trans polyprenyl group. Mediates the second step in the final reaction sequence of ubiquinone-8 (UQ-8) biosynthesis, which is the condensation of the polyisoprenoid side chain with PHB, generating the first membrane-bound Q intermediate 3-octaprenyl-4-hydroxybenzoate. This chain is 4-hydroxybenzoate octaprenyltransferase, found in Aliivibrio salmonicida (strain LFI1238) (Vibrio salmonicida (strain LFI1238)).